Here is a 480-residue protein sequence, read N- to C-terminus: MVRLFLTLSPAISRFNLYPGISILARNNNSLRLQKHHKLKTKTPTFSLISPSSSPNFQRTRFYSTETRISSLPYSENPNFDDNLVVLGIETSCDDTAAAVVRGNGEILSQVISSQAELLVQYGGVAPKQAEEAHSRVIDKVVQDALDKANLTEKDLSAVAVTIGPGLSLCLRVGVRKARRVAGNFSLPIVGVHHMEAHALVARLVEQELSFPFMALLISGGHNLLVLAHKLGQYTQLGTTVDDAIGEAFDKTAKWLGLDMHRSGGPAVEELALEGDAKSVKFNVPMKYHKDCNFSYAGLKTQVRLAIEAKEIDAKCPVSSATNEDRRNRADIAASFQRVAVLHLEEKCERAIDWALELEPSIKHMVISGGVASNKYVRLRLNNIVENKNLKLVCPPPSLCTDNGVMVAWTGLEHFRVGRYDPPPPATEPEDYVYDLRPRWPLGEEYAKGRSEARSMRTARIHPSLTSIIRADSLQQQTQT.

A mitochondrion-targeting transit peptide spans 1–86 (MVRLFLTLSP…NPNFDDNLVV (86 aa)). A divalent metal cation-binding residues include His-194 and His-198. Residues 217–221 (LISGG), Asp-250, Gly-265, Glu-269, 373–374 (SN), and Thr-401 contribute to the substrate site. Asp-402 contributes to the a divalent metal cation binding site.

This sequence belongs to the KAE1 / TsaD family. In terms of assembly, homodimer. The cofactor is a divalent metal cation. Expressed in young developing leaves, roots, flowers and siliques.

It localises to the mitochondrion inner membrane. The enzyme catalyses L-threonylcarbamoyladenylate + adenosine(37) in tRNA = N(6)-L-threonylcarbamoyladenosine(37) in tRNA + AMP + H(+). Functionally, required for the formation of a threonylcarbamoyl group on adenosine at position 37 (t(6)A37) in mitochondrial tRNAs that read codons beginning with adenine. Probably involved in the transfer of the threonylcarbamoyl moiety of threonylcarbamoyl-AMP (TC-AMP) to the N6 group of A37. Involved in mitochondrial genome maintenance. May have a role in embryonic development in plants. The protein is Probable tRNA N6-adenosine threonylcarbamoyltransferase, mitochondrial of Arabidopsis thaliana (Mouse-ear cress).